The primary structure comprises 419 residues: GTPase Obg (419 aa).

The Obg domain occupies 1–156 (MRFVDYVSIE…FYLDLQLKVM (156 aa)). The 178-residue stretch at 157-334 (ADIGLVGKPN…LGENQKKLEI (178 aa)) folds into the OBG-type G domain. Residues 163–170 (GKPNAGKS), 188–192 (FTTLV), 209–212 (DLPG), 278–281 (NKCD), and 315–317 (NII) contribute to the GTP site. Positions 170 and 190 each coordinate Mg(2+). One can recognise an OCT domain in the interval 342 to 419 (IEFNLKAPFL…RIYEFEFHWN (78 aa)).

The protein belongs to the TRAFAC class OBG-HflX-like GTPase superfamily. OBG GTPase family. As to quaternary structure, monomer. It depends on Mg(2+) as a cofactor.

Its subcellular location is the cytoplasm. In terms of biological role, an essential GTPase which binds GTP, GDP and possibly (p)ppGpp with moderate affinity, with high nucleotide exchange rates and a fairly low GTP hydrolysis rate. Plays a role in control of the cell cycle, stress response, ribosome biogenesis and in those bacteria that undergo differentiation, in morphogenesis control. The polypeptide is GTPase Obg (Mesomycoplasma hyopneumoniae (strain 7448) (Mycoplasma hyopneumoniae)).